Consider the following 221-residue polypeptide: Capsid protein (221 aa).

Positions 1–24 (MSSSQKKAGGKAGKPTKRSQNYAA) are disordered. Residue serine 2 is modified to N-acetylserine; by host.

This sequence belongs to the alphamovirus/ilarvirus capsid protein family.

The protein localises to the virion. In terms of biological role, capsid protein. Binds to the to the 3' end of the nonpolyadenylated viral RNA and is involved in viral RNA translation initiation. Probably binds RNA and plays a role in packaging. This is Capsid protein from Alfalfa mosaic virus (AMV).